The following is a 645-amino-acid chain: Glucans biosynthesis glucosyltransferase H (645 aa).

The segment covering 1-12 (MDGTVTLSSTPT) has biased composition (polar residues). The disordered stretch occupies residues 1 to 22 (MDGTVTLSSTPTAIPPVSALDA). A run of 7 helical transmembrane segments spans residues 64 to 84 (LIGGTFAATAVAVWVMLSVLW), 98 to 118 (LFTLLFAWIAMSFASAVAGFV), 423 to 443 (APMWGLLMLIGIGIPLAGVGI), 465 to 485 (AIWIFICTMFVLLAPKLLGYI), 504 to 524 (AVSILLETVLAALMAPVVMYL), 559 to 579 (YGGLTVFGLFMGAVAYAVSPA), and 580 to 600 (LAAWMGPVIVGMALSIPVVAL).

Belongs to the glycosyltransferase 2 family. OpgH subfamily.

The protein resides in the cell inner membrane. The protein operates within glycan metabolism; osmoregulated periplasmic glucan (OPG) biosynthesis. In terms of biological role, involved in the biosynthesis of osmoregulated periplasmic glucans (OPGs). The polypeptide is Glucans biosynthesis glucosyltransferase H (Xanthomonas oryzae pv. oryzae (strain MAFF 311018)).